The chain runs to 97 residues: Large ribosomal subunit protein uL23 (97 aa).

This sequence belongs to the universal ribosomal protein uL23 family. As to quaternary structure, part of the 50S ribosomal subunit. Contacts protein L29, and trigger factor when it is bound to the ribosome.

Its function is as follows. One of the early assembly proteins it binds 23S rRNA. One of the proteins that surrounds the polypeptide exit tunnel on the outside of the ribosome. Forms the main docking site for trigger factor binding to the ribosome. This Mesorhizobium japonicum (strain LMG 29417 / CECT 9101 / MAFF 303099) (Mesorhizobium loti (strain MAFF 303099)) protein is Large ribosomal subunit protein uL23.